The sequence spans 439 residues: MSDNIYSVSQLNSAARQMLEGNFCQIWLTGEISNFTQPVSGHWYLTLKDENAQVRCAMFRMKNLRVAFRPQNGMQVLVRANVSLYEPRGDYQLIIDSMHPAGEGLLQQQFEALKMKLAAEGLFAQNLKKTLPHFSKAVGIITSSTGAALQDILHILARRDPSLKVVIYPTAVQGKEATAEIVQMIELANARQEVDVLIVGRGGGSLEDLWCFNEEEVARAIFRSTLPIISAVGHETDVTIADFVADLRAPTPSAAAELVSRNQDELLQQLRHQQQRLDMAFDRLFTRKSQRLKQLALRLQNQHPQNQLRAQQAKNEQLTHRLQLAILRQFENTQQKFTALSVRLKQNPLPYRIQRYQQGLEQLKVRLNFCVNRQVTERQNKLATLCGKLDGLSPLKVLARGYSIAENPQGKAIVSVKDVNQGDFITTQVADGKIVSKVL.

Belongs to the XseA family. In terms of assembly, heterooligomer composed of large and small subunits.

It is found in the cytoplasm. The catalysed reaction is Exonucleolytic cleavage in either 5'- to 3'- or 3'- to 5'-direction to yield nucleoside 5'-phosphates.. Its function is as follows. Bidirectionally degrades single-stranded DNA into large acid-insoluble oligonucleotides, which are then degraded further into small acid-soluble oligonucleotides. This is Exodeoxyribonuclease 7 large subunit from Haemophilus influenzae (strain ATCC 51907 / DSM 11121 / KW20 / Rd).